The sequence spans 266 residues: MANKIEVKDLLEAGVHFGHMTRKWDPNMAPYIYMERNGIHIINLYKTAAKIEEANEALKKIAASGRKILFVATKKQAKDIVAEKAAAANMPYITERWPGGMLTNFVTIRKAVKKMSTIDRMKKDGTFMTLSKKERLQVDRLRAKLEKNLGSISDMSRLPAALFVVDIKAEHIAIKEAQKLNIPVFAMVDTNSDPRLVEYVIPANDDASKSIDKILTLVTEAIIDGLANRTSDKEADTTTEEVAQEEVTDTKADEKAIVAEAAKTKE.

Positions 229–254 are disordered; the sequence is RTSDKEADTTTEEVAQEEVTDTKADE. A compositionally biased stretch (acidic residues) spans 237-247; it reads TTTEEVAQEEV.

The protein belongs to the universal ribosomal protein uS2 family.

The chain is Small ribosomal subunit protein uS2 from Flavobacterium psychrophilum (strain ATCC 49511 / DSM 21280 / CIP 103535 / JIP02/86).